Consider the following 111-residue polypeptide: MADKAILWALISASTKEGRKACSLSYFACKAAEAELGLAYMAANDNKEFLTSLSNIMRYKIDAGLSESYTCYLLSKGKIIRPYLKNLNPLQLAADCIETVNKIKDKNKKNH.

The chain is Protein YibV (yibV) from Escherichia coli O157:H7.